Here is a 408-residue protein sequence, read N- to C-terminus: Leucine aminopeptidase 1 (408 aa).

Residues 1–16 (MKVSSAIALLLPVVAA) form the signal peptide. Residues 17–89 (RFVDSAFEQD…SAQSATTGPA (73 aa)) constitute a propeptide that is removed on maturation. N-linked (GlcNAc...) asparagine glycans are attached at residues Asn95, Asn108, and Asn182. Residues His190, Asp209, Glu248, and Asp275 each coordinate Zn(2+). Residues Cys324 and Cys328 are joined by a disulfide bond. Position 357 (His357) interacts with Zn(2+).

Belongs to the peptidase M28 family. M28E subfamily. Monomer. Zn(2+) is required as a cofactor.

The protein localises to the secreted. In terms of biological role, extracellular aminopeptidase that allows assimilation of proteinaceous substrates. This Grosmannia clavigera (strain kw1407 / UAMH 11150) (Blue stain fungus) protein is Leucine aminopeptidase 1 (LAP1).